Reading from the N-terminus, the 404-residue chain is Cysteine desulfurase IscS (404 aa).

Residues 75-76, Asn-155, Gln-183, and 203-205 each bind pyridoxal 5'-phosphate; these read AT and SAH. The residue at position 206 (Lys-206) is an N6-(pyridoxal phosphate)lysine. Thr-243 lines the pyridoxal 5'-phosphate pocket. Residue Cys-328 is the Cysteine persulfide intermediate of the active site. Cys-328 provides a ligand contact to [2Fe-2S] cluster.

Belongs to the class-V pyridoxal-phosphate-dependent aminotransferase family. NifS/IscS subfamily. As to quaternary structure, homodimer. Forms a heterotetramer with IscU, interacts with other sulfur acceptors. Pyridoxal 5'-phosphate serves as cofactor.

The protein resides in the cytoplasm. It carries out the reaction (sulfur carrier)-H + L-cysteine = (sulfur carrier)-SH + L-alanine. It functions in the pathway cofactor biosynthesis; iron-sulfur cluster biosynthesis. Functionally, master enzyme that delivers sulfur to a number of partners involved in Fe-S cluster assembly, tRNA modification or cofactor biosynthesis. Catalyzes the removal of elemental sulfur atoms from cysteine to produce alanine. Functions as a sulfur delivery protein for Fe-S cluster synthesis onto IscU, an Fe-S scaffold assembly protein, as well as other S acceptor proteins. The protein is Cysteine desulfurase IscS of Vibrio campbellii (strain ATCC BAA-1116).